The chain runs to 337 residues: Phosphate acyltransferase (337 aa).

This sequence belongs to the PlsX family. As to quaternary structure, homodimer. Probably interacts with PlsY.

It is found in the cytoplasm. It carries out the reaction a fatty acyl-[ACP] + phosphate = an acyl phosphate + holo-[ACP]. It participates in lipid metabolism; phospholipid metabolism. Its function is as follows. Catalyzes the reversible formation of acyl-phosphate (acyl-PO(4)) from acyl-[acyl-carrier-protein] (acyl-ACP). This enzyme utilizes acyl-ACP as fatty acyl donor, but not acyl-CoA. In Ehrlichia chaffeensis (strain ATCC CRL-10679 / Arkansas), this protein is Phosphate acyltransferase.